We begin with the raw amino-acid sequence, 509 residues long: MIGTIAGVSGIAGAAVGAGACYLWLKNSTQKKFAHLEMEAKAKAKAISNEAELLLQESQMKIKTRELEHEAEFQKRLVQVEERNRALILEQKAVEKEEEALLLLEQRILEKESVLEALEEKKQKQISETVEKLQHAASMTQEEAKAYILEKVEEQSRAEIASIVRRYEQLAKEEGEKKANYILAQATTRYAGEFAGERLINLVNLPSDEHKGRIIGKEGRNIKALEMLLGVDIVIDETPGVILVSSFNLYRRAIATRVIEILIEDGRIHPGRIEEVHEKVEKEFEEKTYEEGENILIDLGLFPMHEELVKLIGRLKYRASYGQNALAHTLEVAKLARVMAAEMGGDEKLALRAGLLHDIGKALTQDMGGSHVEIGAELCRRYNEHPTVINAIYAHHGHEEPDSVESAAVCAADTLSAARPGARREVLESFTKRVKEIEEIATSKENVERAYAINAGREIRVFVNANRMSDNEAVLLSKEIAKEIKDKVQFPGEIKVNVIRETRAVSIAK.

The chain crosses the membrane as a helical span at residues 5–25 (IAGVSGIAGAAVGAGACYLWL). A KH domain is found at 199–265 (LINLVNLPSD…TRVIEILIED (67 aa)). Residues 325–418 (ALAHTLEVAK…VCAADTLSAA (94 aa)) enclose the HD domain.

Belongs to the RNase Y family.

It is found in the cell membrane. In terms of biological role, endoribonuclease that initiates mRNA decay. The protein is Ribonuclease Y of Sulfurovum sp. (strain NBC37-1).